The primary structure comprises 215 residues: Hibernation-associated plasma protein HP-25 (215 aa).

An N-terminal signal peptide occupies residues 1–28 (MPAQRGGALSMGAAGFWILVLSITSALA). Residues 29 to 96 (DSNNQGNSEP…RPKSAFAVKL (68 aa)) are disordered. 2 stretches are compositionally biased toward pro residues: residues 39-51 (CGPP…PGIP) and 60-77 (LGPP…PQGP). Residues 40-81 (GPPGPPGPPGIPGFPGAPGALGPPGPPGVPGIPGPQGPPGDV) form the Collagen-like domain. The C1q domain occupies 85-215 (SSRPKSAFAV…VFFGYLLYGK (131 aa)). N167 carries N-linked (GlcNAc...) asparagine glycosylation.

As to expression, plasma; synthesized in the liver.

The protein localises to the secreted. Its function is as follows. Plasma proteins HP-20, HP-25, HP-27 and HP-55 form a 140 kDa complex via disulfide bonds in the plasma and are hibernation specific. The polypeptide is Hibernation-associated plasma protein HP-25 (Tamias sibiricus (Siberian chipmunk)).